The chain runs to 1094 residues: Isoleucine--tRNA ligase (1094 aa).

A 'HIGH' region motif is present at residues 53–63; it reads PFANGLPHYGH. The short motif at 624–628 is the 'KMSKS' region element; it reads KLSKR. Residue Lys-627 participates in ATP binding.

This sequence belongs to the class-I aminoacyl-tRNA synthetase family. IleS type 2 subfamily. As to quaternary structure, monomer. Zn(2+) is required as a cofactor.

It is found in the cytoplasm. It catalyses the reaction tRNA(Ile) + L-isoleucine + ATP = L-isoleucyl-tRNA(Ile) + AMP + diphosphate. Its function is as follows. Catalyzes the attachment of isoleucine to tRNA(Ile). As IleRS can inadvertently accommodate and process structurally similar amino acids such as valine, to avoid such errors it has two additional distinct tRNA(Ile)-dependent editing activities. One activity is designated as 'pretransfer' editing and involves the hydrolysis of activated Val-AMP. The other activity is designated 'posttransfer' editing and involves deacylation of mischarged Val-tRNA(Ile). The sequence is that of Isoleucine--tRNA ligase from Rickettsia felis (strain ATCC VR-1525 / URRWXCal2) (Rickettsia azadi).